Reading from the N-terminus, the 623-residue chain is Bifunctional methionine biosynthesis protein MetXA/MetW (623 aa).

A compositionally biased stretch (polar residues) spans 1 to 17 (MTSGRSTRVTMFESQAS). Residues 1–30 (MTSGRSTRVTMFESQASMGEPSNEDLSSTD) are disordered. The AB hydrolase-1 domain occupies 77–385 (NAVLVCHAVS…TTNAGHDAFL (309 aa)). Residue S183 is the Nucleophile of the active site. R253 is a substrate binding site. Catalysis depends on residues D348 and H381. D382 provides a ligand contact to substrate. Residues 417–619 (NVDEESILEI…NADTAVIAFH (203 aa)) are metW.

This sequence in the N-terminal section; belongs to the AB hydrolase superfamily. MetX family. It in the C-terminal section; belongs to the MetW family. In terms of assembly, homodimer.

It is found in the cytoplasm. The catalysed reaction is L-homoserine + acetyl-CoA = O-acetyl-L-homoserine + CoA. It participates in amino-acid biosynthesis; L-methionine biosynthesis via de novo pathway; O-acetyl-L-homoserine from L-homoserine: step 1/1. In terms of biological role, transfers an acetyl group from acetyl-CoA to L-homoserine, forming acetyl-L-homoserine. This Rhodopirellula baltica (strain DSM 10527 / NCIMB 13988 / SH1) protein is Bifunctional methionine biosynthesis protein MetXA/MetW.